The chain runs to 867 residues: Cadherin-related family member 1 (867 aa).

Positions 1-21 (MKHEWNLCPSIFFSIFHICLS) are cleaved as a signal peptide. Topologically, residues 22–707 (VQTNYGPYFF…SKDNPMKALG (686 aa)) are extracellular. 6 consecutive Cadherin domains span residues 39 to 138 (NGNM…SPGF), 139 to 250 (LNTP…PPVF), 251 to 357 (VGTP…PPTF), 363 to 476 (PQNR…VPRF), 477 to 580 (SSEY…SPEF), and 572 to 692 (DIND…GPMA). The helical transmembrane segment at 708–728 (VLAGVMAIMVVITIFISTAMF) threads the bilayer. Over 729–867 (WRNKKSNRVM…KNAGSSMSFY (139 aa)) the chain is Cytoplasmic. Residues 777–825 (EMESGPKNENRNNNYQGIPVPPRAPCPPPPPRLMPKVSKTERSLPTVSG) form a disordered region. A compositionally biased stretch (pro residues) spans 795–809 (PVPPRAPCPPPPPRL).

As to expression, expressed in photoreceptor cells of the outer nuclear layer of the retina and in the pinal gland.

The protein resides in the membrane. Potential calcium-dependent cell-adhesion protein. This chain is Cadherin-related family member 1 (cdhr1), found in Xenopus laevis (African clawed frog).